The primary structure comprises 164 residues: Coenzyme Q-binding protein coq10, mitochondrial (164 aa).

This sequence belongs to the COQ10 family. Interacts with coenzyme Q.

The protein resides in the mitochondrion inner membrane. Required for the function of coenzyme Q in the respiratory chain. May serve as a chaperone or may be involved in the transport of Q6 from its site of synthesis to the catalytic sites of the respiratory complexes. This Schizosaccharomyces pombe (strain 972 / ATCC 24843) (Fission yeast) protein is Coenzyme Q-binding protein coq10, mitochondrial.